The following is a 434-amino-acid chain: 4-hydroxy-3-methylbut-2-en-1-yl diphosphate synthase (flavodoxin) (434 aa).

Polar residues predominate over residues 1–15 (MQSEAQSPRSSQICS). The segment at 1-24 (MQSEAQSPRSSQICSTEPVFGGHQ) is disordered. Residues cysteine 322, cysteine 325, cysteine 368, and glutamate 375 each contribute to the [4Fe-4S] cluster site.

Belongs to the IspG family. [4Fe-4S] cluster serves as cofactor.

It catalyses the reaction (2E)-4-hydroxy-3-methylbut-2-enyl diphosphate + oxidized [flavodoxin] + H2O + 2 H(+) = 2-C-methyl-D-erythritol 2,4-cyclic diphosphate + reduced [flavodoxin]. Its pathway is isoprenoid biosynthesis; isopentenyl diphosphate biosynthesis via DXP pathway; isopentenyl diphosphate from 1-deoxy-D-xylulose 5-phosphate: step 5/6. Its function is as follows. Converts 2C-methyl-D-erythritol 2,4-cyclodiphosphate (ME-2,4cPP) into 1-hydroxy-2-methyl-2-(E)-butenyl 4-diphosphate. The polypeptide is 4-hydroxy-3-methylbut-2-en-1-yl diphosphate synthase (flavodoxin) (Burkholderia cenocepacia (strain ATCC BAA-245 / DSM 16553 / LMG 16656 / NCTC 13227 / J2315 / CF5610) (Burkholderia cepacia (strain J2315))).